The primary structure comprises 263 residues: Malonyl-[acyl-carrier protein] O-methyltransferase (263 aa).

It belongs to the methyltransferase superfamily.

The enzyme catalyses malonyl-[ACP] + S-adenosyl-L-methionine = malonyl-[ACP] methyl ester + S-adenosyl-L-homocysteine. Its pathway is cofactor biosynthesis; biotin biosynthesis. In terms of biological role, converts the free carboxyl group of a malonyl-thioester to its methyl ester by transfer of a methyl group from S-adenosyl-L-methionine (SAM). It allows to synthesize pimeloyl-ACP via the fatty acid synthetic pathway. The sequence is that of Malonyl-[acyl-carrier protein] O-methyltransferase from Chlorobium luteolum (strain DSM 273 / BCRC 81028 / 2530) (Pelodictyon luteolum).